A 281-amino-acid polypeptide reads, in one-letter code: 33 kDa chaperonin (281 aa).

Cystine bridges form between C229-C231 and C262-C265.

Belongs to the HSP33 family. Under oxidizing conditions two disulfide bonds are formed involving the reactive cysteines. Under reducing conditions zinc is bound to the reactive cysteines and the protein is inactive.

The protein resides in the cytoplasm. Its function is as follows. Redox regulated molecular chaperone. Protects both thermally unfolding and oxidatively damaged proteins from irreversible aggregation. Plays an important role in the bacterial defense system toward oxidative stress. This is 33 kDa chaperonin from Pseudoalteromonas translucida (strain TAC 125).